Reading from the N-terminus, the 398-residue chain is Lysophospholipid transporter LplT (398 aa).

The next 12 helical transmembrane spans lie at valine 19–alanine 39, valine 53–alanine 73, isoleucine 96–tyrosine 116, leucine 139–alanine 159, isoleucine 164–isoleucine 184, serine 195–tryptophan 213, leucine 227–leucine 247, tyrosine 257–valine 277, threonine 281–leucine 301, alanine 304–valine 324, asparagine 352–alanine 372, and valine 373–tryptophan 393.

The protein belongs to the major facilitator superfamily. LplT (TC 2.A.1.42) family.

The protein resides in the cell inner membrane. In terms of biological role, catalyzes the facilitated diffusion of 2-acyl-glycero-3-phosphoethanolamine (2-acyl-GPE) into the cell. In Salmonella arizonae (strain ATCC BAA-731 / CDC346-86 / RSK2980), this protein is Lysophospholipid transporter LplT.